The chain runs to 157 residues: UPF0262 protein RHE_CH00582 (157 aa).

Belongs to the UPF0262 family.

This Rhizobium etli (strain ATCC 51251 / DSM 11541 / JCM 21823 / NBRC 15573 / CFN 42) protein is UPF0262 protein RHE_CH00582.